We begin with the raw amino-acid sequence, 375 residues long: FK506-binding protein 4 (375 aa).

Disordered stretches follow at residues 55 to 78 (GFED…EEEI) and 127 to 265 (PPDF…SKMT). Composition is skewed to acidic residues over residues 56 to 66 (FEDDYDEEEQE) and 131 to 173 (FDQD…DPDR). Basic and acidic residues predominate over residues 196–216 (DSKKRAAEKPVKETAAKKLKA). Residues 217–230 (DASAASAASTPTKA) show a composition bias toward low complexity. Positions 231 to 261 (IETKGEKQTKGAKDTKPKSETVEKKTVDKST) are enriched in basic and acidic residues. The PPIase FKBP-type domain occupies 289 to 375 (GQKVGMRYVG…VFDVKLVEIK (87 aa)).

Belongs to the FKBP-type PPIase family. FKBP3/4 subfamily. Binds to histones H3 and H4.

It localises to the nucleus. It carries out the reaction [protein]-peptidylproline (omega=180) = [protein]-peptidylproline (omega=0). Inhibited by both FK506 and rapamycin. Its function is as follows. PPIase that acts as a histone chaperone. Histone proline isomerase that increases the rate of cis-trans isomerization at prolines on the histone H3 N-terminal tail. Proline isomerization influences H3 methylation thereby regulating gene expression. The protein is FK506-binding protein 4 (FPR4) of Mycosarcoma maydis (Corn smut fungus).